A 164-amino-acid chain; its full sequence is 2-keto-3-deoxy-D-glycero-D-galacto-9-phosphonononic acid phosphatase (164 aa).

2 residues coordinate Mg(2+): D10 and D12. Residues T34, 54-56 (TGE), 64-67 (RAEK), and K80 each bind substrate. D103 provides a ligand contact to Mg(2+). Position 106 (N106) interacts with substrate.

The protein belongs to the KdsC family. Homotetramer. Mg(2+) is required as a cofactor.

It catalyses the reaction 3-deoxy-D-glycero-beta-D-galacto-non-2-ulopyranosonate 9-phosphate + H2O = 3-deoxy-D-glycero-beta-D-galacto-non-2-ulopyranosonate + phosphate. Its function is as follows. Involved in the biosynthesis of 2-keto-3-deoxy-D-glycero-D-galacto-nononic acid used in cell-wall polysaccharides. Catalyzes the hydrolysis of 2-keto-3-deoxy-D-glycero-D-galacto-9-phosphonononic acid (KDN-9-P) to yield 2-keto-3-deoxy-D-glycero-D-galacto-nononic acid (KDN). Also able to hydrolyze N-acetylneuraminate-9-phosphate (Neu5NAc-9-P), 2-keto-3-deoxy-D-manno-octulosonate-8-phosphate (KDO-8-P), phosphoenolpyruvate (PEP), gluconate 6-phosphate, tyrosine phosphate ester and glucose-6-P as substrate. The protein is 2-keto-3-deoxy-D-glycero-D-galacto-9-phosphonononic acid phosphatase of Bacteroides thetaiotaomicron (strain ATCC 29148 / DSM 2079 / JCM 5827 / CCUG 10774 / NCTC 10582 / VPI-5482 / E50).